The following is a 158-amino-acid chain: Histone H3-like centromeric protein CSE4 (158 aa).

A compositionally biased stretch (polar residues) spans 1-18 (MARISTSSNRPVPTSSAL). Positions 1-59 (MARISTSSNRPVPTSSALRRQRERDDGGRSTRAPGHNTGLYGNQPGDPPTIRSTNTTVK) are disordered. Positions 20–29 (RQRERDDGGR) are enriched in basic and acidic residues. Positions 54 to 157 (TNTTVKRRYR…IQLARRIRGN (104 aa)) are H3-like.

It belongs to the histone H3 family. Component of centromeric nucleosomes, where DNA is wrapped around a histone octamer core. The octamer contains two molecules each of H2A, H2B, CSE4/CENPA and H4 assembled in one CSE4-H4 heterotetramer and two H2A-H2B heterodimers. Interacts with the inner kinetochore. In terms of processing, ubiquitinated. Is degraded through ubiquitin-mediated proteolysis when not protected by its association to the kinetochore.

Its subcellular location is the nucleus. It localises to the chromosome. It is found in the centromere. Functionally, histone H3-like nucleosomal protein that is specifically found in centromeric nucleosomes. Replaces conventional H3 in the nucleosome core of centromeric chromatin that serves as an assembly site for the inner kinetochore. Required for recruitment and assembly of kinetochore proteins, mitotic progression and chromosome segregation. May serve as an epigenetic mark that propagates centromere identity through replication and cell division. The sequence is that of Histone H3-like centromeric protein CSE4 (CSE4) from Millerozyma farinosa (Yeast).